The following is a 239-amino-acid chain: Ribonuclease P protein component 3 (239 aa).

It belongs to the eukaryotic/archaeal RNase P protein component 3 family. Consists of a catalytic RNA component and at least 4-5 protein subunits.

Its subcellular location is the cytoplasm. It catalyses the reaction Endonucleolytic cleavage of RNA, removing 5'-extranucleotides from tRNA precursor.. Part of ribonuclease P, a protein complex that generates mature tRNA molecules by cleaving their 5'-ends. The protein is Ribonuclease P protein component 3 of Methanosarcina barkeri (strain Fusaro / DSM 804).